The chain runs to 429 residues: UDP-N-acetylglucosamine 1-carboxyvinyltransferase (429 aa).

22–23 lines the phosphoenolpyruvate pocket; the sequence is KN. Residue Arg102 coordinates UDP-N-acetyl-alpha-D-glucosamine. Cys126 (proton donor) is an active-site residue. Cys126 is subject to 2-(S-cysteinyl)pyruvic acid O-phosphothioketal. UDP-N-acetyl-alpha-D-glucosamine contacts are provided by residues 131 to 135, Asp316, and Ile338; that span reads RPVDL.

This sequence belongs to the EPSP synthase family. MurA subfamily.

The protein resides in the cytoplasm. The catalysed reaction is phosphoenolpyruvate + UDP-N-acetyl-alpha-D-glucosamine = UDP-N-acetyl-3-O-(1-carboxyvinyl)-alpha-D-glucosamine + phosphate. Its pathway is cell wall biogenesis; peptidoglycan biosynthesis. Its function is as follows. Cell wall formation. Adds enolpyruvyl to UDP-N-acetylglucosamine. The polypeptide is UDP-N-acetylglucosamine 1-carboxyvinyltransferase (Methylobacterium sp. (strain 4-46)).